The primary structure comprises 312 residues: Very-long-chain 3-oxoacyl-CoA reductase (312 aa).

A helical transmembrane segment spans residues A4–L24. G50–L79 lines the NADP(+) pocket. 2 helical membrane passes run G182 to Y202 and G271 to F291. S189 lines the substrate pocket. Y202 acts as the Proton acceptor in catalysis. The short motif at K308–N312 is the Di-lysine motif element.

The protein belongs to the short-chain dehydrogenases/reductases (SDR) family. 17-beta-HSD 3 subfamily.

Its subcellular location is the endoplasmic reticulum membrane. The catalysed reaction is a very-long-chain (3R)-3-hydroxyacyl-CoA + NADP(+) = a very-long-chain 3-oxoacyl-CoA + NADPH + H(+). The enzyme catalyses 17beta-estradiol + NAD(+) = estrone + NADH + H(+). It catalyses the reaction 17beta-estradiol + NADP(+) = estrone + NADPH + H(+). It carries out the reaction 3-oxooctadecanoyl-CoA + NADPH + H(+) = (3R)-hydroxyoctadecanoyl-CoA + NADP(+). The catalysed reaction is (7Z,10Z,13Z,16Z)-3-oxodocosatetraenoyl-CoA + NADPH + H(+) = (3R)-hydroxy-(7Z,10Z,13Z,16Z)-docosatetraenoyl-CoA + NADP(+). The enzyme catalyses 3-oxo-(7Z,10Z,13Z,16Z,19Z)-docosapentaenoyl-CoA + NADPH + H(+) = (3R)-hydroxy-(7Z,10Z,13Z,16Z,19Z)-docosapentaenoyl-CoA + NADP(+). It catalyses the reaction (8Z,11Z,14Z)-3-oxoeicosatrienoyl-CoA + NADPH + H(+) = (3R)-hydroxy-(8Z,11Z,14Z)-eicosatrienoyl-CoA + NADP(+). It functions in the pathway lipid metabolism; fatty acid biosynthesis. It participates in steroid biosynthesis; estrogen biosynthesis. Its function is as follows. Catalyzes the second of the four reactions of the long-chain fatty acids elongation cycle. This endoplasmic reticulum-bound enzymatic process, allows the addition of two carbons to the chain of long- and very long-chain fatty acids/VLCFAs per cycle. This enzyme has a 3-ketoacyl-CoA reductase activity, reducing 3-ketoacyl-CoA to 3-hydroxyacyl-CoA, within each cycle of fatty acid elongation. Thereby, it may participate in the production of VLCFAs of different chain lengths that are involved in multiple biological processes as precursors of membrane lipids and lipid mediators. May also catalyze the transformation of estrone (E1) into estradiol (E2) and play a role in estrogen formation. The polypeptide is Very-long-chain 3-oxoacyl-CoA reductase (HSD17B12) (Bos taurus (Bovine)).